The primary structure comprises 765 residues: Probable ATP-dependent RNA helicase DDX27 (765 aa).

A phosphoserine mark is found at Ser23, Ser25, and Ser48. A compositionally biased stretch (acidic residues) spans 43 to 63; the sequence is LGKNRSADFNPDFVFTEKEGT. Disordered stretches follow at residues 43–83 and 111–179; these read LGKN…KRAA and KEKE…FFED. The short motif at 55–57 is the Required for interaction with the PEBOW complex element; that stretch reads FVF. Basic and acidic residues predominate over residues 129-156; the sequence is ENDEEGSEDEASETDYSSADENILTKAD. Phosphoserine is present on residues Ser135 and Ser146. Residues 157 to 172 show a composition bias toward acidic residues; the sequence is TLKVKDRKKKKKKGQE. The Nuclear localization signal motif lies at 164–169; sequence KKKKKK. Positions 187–215 match the Q motif motif; sequence LSFQDMNLSRPLLKAITAMGFKQPTPIQK. Residues 218–392 enclose the Helicase ATP-binding domain; the sequence is IPVGLLGKDI…SVSLKNPVRI (175 aa). 231 to 238 contributes to the ATP binding site; that stretch reads AATGTGKT. Positions 340-343 match the DEAD box motif; that stretch reads DEAD. A Helicase C-terminal domain is found at 426–572; that stretch reads LLTRTFTDHV…DVILKFRDKI (147 aa). Over residues 716-725 the composition is skewed to basic residues; it reads VFDEELTNTS.

The protein belongs to the DEAD box helicase family. DDX27/DRS1 subfamily. As to quaternary structure, associates with PeBoW complex, composed of BOP1, PES1 and WDR12. Interacts directly with BOP1 and PES1.

The protein resides in the nucleus. It localises to the nucleolus. The protein localises to the chromosome. It carries out the reaction ATP + H2O = ADP + phosphate + H(+). Functionally, probable ATP-dependent RNA helicase. Component of the nucleolar ribosomal RNA (rRNA) processing machinery that regulates 3' end formation of ribosomal 47S rRNA. This is Probable ATP-dependent RNA helicase DDX27 (DDX27) from Homo sapiens (Human).